A 488-amino-acid chain; its full sequence is 2,3-bisphosphoglycerate-independent phosphoglycerate mutase (488 aa).

Residue S10 is the Phosphoserine intermediate of the active site. S10 serves as a coordination point for Mn(2+). Residues H69, R99–D100, R135, R142, R215–R218, and K290 each bind substrate. D359, H363, D400, H401, and H430 together coordinate Mn(2+).

This sequence belongs to the BPG-independent phosphoglycerate mutase family. Monomer. Mn(2+) is required as a cofactor.

It localises to the cytoplasm. It catalyses the reaction (2R)-2-phosphoglycerate = (2R)-3-phosphoglycerate. It functions in the pathway carbohydrate degradation; glycolysis; pyruvate from D-glyceraldehyde 3-phosphate: step 3/5. In terms of biological role, catalyzes the interconversion of 2-phosphoglycerate and 3-phosphoglycerate. The chain is 2,3-bisphosphoglycerate-independent phosphoglycerate mutase from Prunus dulcis (Almond).